The following is a 489-amino-acid chain: Sphingolipid C9-methyltransferase (489 aa).

2 consecutive transmembrane segments (helical) span residues 29-49 and 59-79; these read GAKNFSNWLLLGLLTGVPLFV and TFIFFFILFAIPILMAYWTVL. S-adenosyl-L-methionine contacts are provided by residues 202–203, 239–247, 265–270, and 295–296; these read YT, LLDLGCGWG, TLGKNQ, and YR.

This sequence belongs to the CFA/CMAS family.

The protein resides in the membrane. It catalyses the reaction a (4E,8E)-4-sphinga-4,8-dienine ceramide + S-adenosyl-L-methionine = a 9-methyl-(4E,8E)-sphinga-4,8-dienine ceramide + S-adenosyl-L-homocysteine + H(+). The protein operates within lipid metabolism; sphingolipid metabolism. Its function is as follows. Catalyzes methylation of the sphingoid base component of glucosylceramides (GluCers) at the C9-position. Sphingolipid C9-methylation requires 4,8-desaturated ceramides as substrates. Glucosylceramides play important roles in growth, differentiation and pathogenicity. The methyl group at the C9-position distinguishes fungal glucosylceramides from those of plants and animals, and may thus play a role in host-pathogen interactions enabling the host to recognize the fungal attack and initiate specific defense responses. The sequence is that of Sphingolipid C9-methyltransferase from Komagataella phaffii (strain GS115 / ATCC 20864) (Yeast).